The sequence spans 427 residues: Light-independent protochlorophyllide reductase subunit N (427 aa).

[4Fe-4S] cluster-binding residues include Cys29, Cys54, and Cys115.

The protein belongs to the BchN/ChlN family. As to quaternary structure, protochlorophyllide reductase is composed of three subunits; BchL, BchN and BchB. Forms a heterotetramer of two BchB and two BchN subunits. It depends on [4Fe-4S] cluster as a cofactor.

The catalysed reaction is chlorophyllide a + oxidized 2[4Fe-4S]-[ferredoxin] + 2 ADP + 2 phosphate = protochlorophyllide a + reduced 2[4Fe-4S]-[ferredoxin] + 2 ATP + 2 H2O. The protein operates within porphyrin-containing compound metabolism; bacteriochlorophyll biosynthesis (light-independent). Its function is as follows. Component of the dark-operative protochlorophyllide reductase (DPOR) that uses Mg-ATP and reduced ferredoxin to reduce ring D of protochlorophyllide (Pchlide) to form chlorophyllide a (Chlide). This reaction is light-independent. The NB-protein (BchN-BchB) is the catalytic component of the complex. This chain is Light-independent protochlorophyllide reductase subunit N, found in Bradyrhizobium sp. (strain ORS 278).